Reading from the N-terminus, the 62-residue chain is DNA-directed RNA polymerase subunit Rpo10 (62 aa).

Zn(2+) contacts are provided by Cys-6, Cys-9, Cys-43, and Cys-44.

It belongs to the archaeal Rpo10/eukaryotic RPB10 RNA polymerase subunit family. In terms of assembly, part of the RNA polymerase complex. It depends on Zn(2+) as a cofactor.

The protein resides in the cytoplasm. The catalysed reaction is RNA(n) + a ribonucleoside 5'-triphosphate = RNA(n+1) + diphosphate. DNA-dependent RNA polymerase (RNAP) catalyzes the transcription of DNA into RNA using the four ribonucleoside triphosphates as substrates. The chain is DNA-directed RNA polymerase subunit Rpo10 from Methanoculleus marisnigri (strain ATCC 35101 / DSM 1498 / JR1).